Reading from the N-terminus, the 677-residue chain is Methionine--tRNA ligase (677 aa).

Positions 15 to 25 (PYANGSIHLGH) match the 'HIGH' region motif. Cysteine 146, cysteine 149, cysteine 159, and cysteine 162 together coordinate Zn(2+). The 'KMSKS' region signature appears at 333 to 337 (KMSKS). Lysine 336 is an ATP binding site. Residues 575–677 (DFAKVDLRVA…AGAKPGHQVK (103 aa)) enclose the tRNA-binding domain.

It belongs to the class-I aminoacyl-tRNA synthetase family. MetG type 1 subfamily. As to quaternary structure, homodimer. Zn(2+) is required as a cofactor.

It localises to the cytoplasm. The enzyme catalyses tRNA(Met) + L-methionine + ATP = L-methionyl-tRNA(Met) + AMP + diphosphate. Functionally, is required not only for elongation of protein synthesis but also for the initiation of all mRNA translation through initiator tRNA(fMet) aminoacylation. In Escherichia coli (strain SE11), this protein is Methionine--tRNA ligase.